We begin with the raw amino-acid sequence, 34 residues long: Photosystem II reaction center protein Y (34 aa).

At 1 to 5 the chain is on the lumenal side; it reads DWRVL. A helical membrane pass occupies residues 6–22; it reads VVLLPVLLAAGWAVRNI. Topologically, residues 23 to 34 are cytoplasmic; the sequence is LPYAVKQVQKLL.

The protein belongs to the PsbY family. PSII is composed of 1 copy each of membrane proteins PsbA, PsbB, PsbC, PsbD, PsbE, PsbF, PsbH, PsbI, PsbJ, PsbK, PsbL, PsbM, PsbT, PsbX, PsbY, PsbZ, Psb30/Ycf12, peripheral proteins PsbO, CyanoQ (PsbQ), PsbU, PsbV and a large number of cofactors. It forms dimeric complexes. This protein is only loosely associated with PSII, and is not often found in crystals. Requires PSII binds multiple chlorophylls, carotenoids and specific lipids. as cofactor.

It localises to the cellular thylakoid membrane. Its function is as follows. Loosely associated component of the core of photosystem II (PSII). PSII is a light-driven water plastoquinone oxidoreductase, using light energy to abstract electrons from H(2)O, generating a proton gradient subsequently used for ATP formation. This Thermostichus vulcanus (Synechococcus vulcanus) protein is Photosystem II reaction center protein Y.